The following is a 1164-amino-acid chain: DNA-directed RNA polymerase 132 kDa polypeptide (1164 aa).

The protein belongs to the RNA polymerase beta chain family. The DNA-dependent RNA polymerase used for intermediate and late genes expression consists of eight subunits (147) kDa, (133) kDa, (35) kDa, (30) kDa, (22) kDa, (19) kDa, (18) kDa and (7) kDa totalling more than 500 kDa in mass. The same holoenzyme, with the addition of the transcription-specificity factor RAP94, is used for early gene expression.

It is found in the virion. It catalyses the reaction RNA(n) + a ribonucleoside 5'-triphosphate = RNA(n+1) + diphosphate. In terms of biological role, part of the DNA-dependent RNA polymerase which catalyzes the transcription of viral DNA into RNA using the four ribonucleoside triphosphates as substrates. Responsible for the transcription of early, intermediate and late genes. DNA-dependent RNA polymerase associates with the early transcription factor (ETF), itself composed of D6 and A7, thereby allowing the early genes transcription. Late transcription, and probably also intermediate transcription, require newly synthesized RNA polymerase. This Cowpox virus (strain GRI-90 / Grishak) (CPV) protein is DNA-directed RNA polymerase 132 kDa polypeptide (RPO132).